Here is a 475-residue protein sequence, read N- to C-terminus: Argininosuccinate lyase (475 aa).

It belongs to the lyase 1 family. Argininosuccinate lyase subfamily.

The protein localises to the cytoplasm. It carries out the reaction 2-(N(omega)-L-arginino)succinate = fumarate + L-arginine. It participates in amino-acid biosynthesis; L-arginine biosynthesis; L-arginine from L-ornithine and carbamoyl phosphate: step 3/3. The sequence is that of Argininosuccinate lyase from Streptomyces coelicolor (strain ATCC BAA-471 / A3(2) / M145).